The primary structure comprises 473 residues: Sulfate adenylyltransferase subunit 1 (473 aa).

Positions 19–238 (KTLLKFLTCG…IKIKNSISSE (220 aa)) constitute a tr-type G domain. The interval 28-35 (GSVDDGKS) is G1. 28–35 (GSVDDGKS) provides a ligand contact to GTP. The tract at residues 86–90 (GITID) is G2. The interval 107–110 (DTPG) is G3. GTP contacts are provided by residues 107 to 111 (DTPGH) and 162 to 165 (NKMD). A G4 region spans residues 162-165 (NKMD). Positions 200–202 (SAL) are G5.

The protein belongs to the TRAFAC class translation factor GTPase superfamily. Classic translation factor GTPase family. CysN/NodQ subfamily. Heterodimer composed of CysD, the smaller subunit, and CysN.

The enzyme catalyses sulfate + ATP + H(+) = adenosine 5'-phosphosulfate + diphosphate. Its pathway is sulfur metabolism; hydrogen sulfide biosynthesis; sulfite from sulfate: step 1/3. In terms of biological role, with CysD forms the ATP sulfurylase (ATPS) that catalyzes the adenylation of sulfate producing adenosine 5'-phosphosulfate (APS) and diphosphate, the first enzymatic step in sulfur assimilation pathway. APS synthesis involves the formation of a high-energy phosphoric-sulfuric acid anhydride bond driven by GTP hydrolysis by CysN coupled to ATP hydrolysis by CysD. The polypeptide is Sulfate adenylyltransferase subunit 1 (Buchnera aphidicola subsp. Acyrthosiphon pisum (strain Tuc7)).